Here is a 238-residue protein sequence, read N- to C-terminus: Ribonuclease PH (238 aa).

Residues Arg-86 and 124-126 (GTR) each bind phosphate.

Belongs to the RNase PH family. As to quaternary structure, homohexameric ring arranged as a trimer of dimers.

The enzyme catalyses tRNA(n+1) + phosphate = tRNA(n) + a ribonucleoside 5'-diphosphate. Functionally, phosphorolytic 3'-5' exoribonuclease that plays an important role in tRNA 3'-end maturation. Removes nucleotide residues following the 3'-CCA terminus of tRNAs; can also add nucleotides to the ends of RNA molecules by using nucleoside diphosphates as substrates, but this may not be physiologically important. Probably plays a role in initiation of 16S rRNA degradation (leading to ribosome degradation) during starvation. The sequence is that of Ribonuclease PH from Haemophilus influenzae (strain PittEE).